We begin with the raw amino-acid sequence, 1788 residues long: U3 small nucleolar RNA-associated protein 10 (1788 aa).

The stretch at 585-622 (LDFQAVVPYAIVALSDPAKKVRRAAAELVTVLGSFYET) is one HEAT 1 repeat. The tract at residues 884–905 (PATKRRRVGSSEKSVDSQSPAD) is disordered. HEAT repeat units lie at residues 926–962 (AKHPELLPSLFTTLSELQHLRTVVGSELGYLQSLVLS), 1049–1086 (QTVKEVIPPLIETFRKSRRNLVASTAELLTSFVVAYEH), 1257–1294 (LSIAEFIKSVEALLDRPNVILRQKVLRALERRVDSESI), 1301–1339 (EALLAFLPQLTAVIRESDDMNYKHTAVNCVDKIAEKYGK), 1703–1740 (EHHKEINSALLKHLRSEQAAVRLAVIKCEQELTARLGE), and 1744–1781 (QSLPEMLPFISELQDDDDEVVERENRRWIVGIEETLGE).

Belongs to the HEATR1/UTP10 family. As to quaternary structure, component of the ribosomal small subunit (SSU) processome.

Its subcellular location is the nucleus. It localises to the nucleolus. In terms of biological role, involved in nucleolar processing of pre-18S ribosomal RNA. Involved in ribosome biosynthesis. In Neurospora crassa (strain ATCC 24698 / 74-OR23-1A / CBS 708.71 / DSM 1257 / FGSC 987), this protein is U3 small nucleolar RNA-associated protein 10 (rbg-5).